A 557-amino-acid chain; its full sequence is (-)-germacrene D synthase (557 aa).

Mg(2+) is bound by residues D310, D314, and E462. The DDXXD motif signature appears at 310 to 314; it reads DDIYD.

The protein belongs to the terpene synthase family. Tpsa subfamily. It depends on Mg(2+) as a cofactor. In terms of tissue distribution, expressed in flowers. Detected in stems, young leaves and tendrils.

The protein localises to the cytoplasm. It carries out the reaction (2E,6E)-farnesyl diphosphate + H2O = (1E,4S,5E,7R)-germacra-1(10),5-dien-11-ol + diphosphate. It catalyses the reaction (2E,6E)-farnesyl diphosphate = (-)-germacrene D + diphosphate. Its pathway is secondary metabolite biosynthesis; terpenoid biosynthesis. In terms of biological role, involved in the biosynthesis of germacrene D. Can use farnesyl diphosphate as substrate, but not geranyl diphosphate or geranylgeranyl diphosphate. Produces mainly (-)-germacrene D along with gamma-cadinene. The protein is (-)-germacrene D synthase of Vitis vinifera (Grape).